A 199-amino-acid polypeptide reads, in one-letter code: Imidazoleglycerol-phosphate dehydratase (199 aa).

This sequence belongs to the imidazoleglycerol-phosphate dehydratase family.

It is found in the cytoplasm. It carries out the reaction D-erythro-1-(imidazol-4-yl)glycerol 3-phosphate = 3-(imidazol-4-yl)-2-oxopropyl phosphate + H2O. Its pathway is amino-acid biosynthesis; L-histidine biosynthesis; L-histidine from 5-phospho-alpha-D-ribose 1-diphosphate: step 6/9. The sequence is that of Imidazoleglycerol-phosphate dehydratase from Rhodospirillum rubrum (strain ATCC 11170 / ATH 1.1.1 / DSM 467 / LMG 4362 / NCIMB 8255 / S1).